A 21-amino-acid chain; its full sequence is Histone H2B 1 (21 aa).

The tract at residues 1–21 (MPDPAKTAPKKGSKKAVTKXA) is disordered. Residues Lys6 and Lys11 each carry the N6-acetyllysine modification. Residues 8-21 (APKKGSKKAVTKXA) are compositionally biased toward basic residues. The residue at position 13 (Ser13) is a Phosphoserine. An N6-acetyllysine mark is found at Lys14 and Lys19. Lys19 participates in a covalent cross-link: Glycyl lysine isopeptide (Lys-Gly) (interchain with G-Cter in ubiquitin).

The protein belongs to the histone H2B family. As to quaternary structure, the nucleosome is a histone octamer containing two molecules each of H2A, H2B, H3 and H4 assembled in one H3-H4 heterotetramer and two H2A-H2B heterodimers. The octamer wraps approximately 147 bp of DNA. Post-translationally, monoubiquitination at the C-terminal Lys gives a specific tag for epigenetic transcriptional activation and is also prerequisite for histone H3 'Lys-4' and 'Lys-79' methylation. In terms of processing, phosphorylated during apoptosis; which facilitates apoptotic chromatin condensation.

The protein resides in the nucleus. Its subcellular location is the chromosome. Core component of nucleosome. Nucleosomes wrap and compact DNA into chromatin, limiting DNA accessibility to the cellular machineries which require DNA as a template. Histones thereby play a central role in transcription regulation, DNA repair, DNA replication and chromosomal stability. DNA accessibility is regulated via a complex set of post-translational modifications of histones, also called histone code, and nucleosome remodeling. Its function is as follows. Has broad-spectrum antimicrobial and antibacterial activity. It is important in the antimicrobial defenses of fish skin and possesses strong activity against saprolegnia, the most common fungal infection in fish. It is also inhibitory to fish bacterial pathogens, such as aeromonas hydrophila, vibrio alginolyticus and E.coli D31. This is Histone H2B 1 from Ictalurus punctatus (Channel catfish).